The primary structure comprises 757 residues: MINQRLFEIDEWKIKTNTFNKEHTRLLESLTSLANGYMGVRGNFEEGYSGDSHQGTYIAGVWFPDKTRVGWWKNGYPEYFGKVINAMNFMGIGLYVDGEKIDLHQNPIELFEVELNMKEGILRRSAVVRIQDKTVRIRSERFLSLAVKELCAIHYEAECLTGDAVITLVPYLDGNVANEDSNYQEQFWQEEAKGADSHSGHLAAKTIENPFGTPRFTVLAAMANETEGFVHESFKTTEMYVENRYSYQTKASLKKFVIVTTSRDFREEELLSKAKELLADVVENGYEDAKRRHTDRWKERWAKADIEIKGDEELQQGIRYNIFQLFSTYYGGDARLNIGPKGFTGEKYGGAAYWDTEAYAVPMYLATAEPEVTKNLLLYRYHQLEAAKRNAAKLGMKGALYPMVTFTGDECHNEWEITFEEIHRNGAICYAIYNYINYTGDRNYMEEYGIDVLVAVSRFWADRVHFSKRKNKYMIHGVTGPNEYENNVNNNWYTNVIAAWTLEYTLQSLESISAEKRRHLDVQEVELEVWREIIQHMYYPFSEELQIFVQHDTFLDKDLQTVDELDPAERPLYQNWSWDKILRSNFIKQADVLQGIYLFNDRFTMEEKRRNFEFYEPMTVHESSLSPSVHAILAAELKLEKKALELYKRTARLDLDNYNHDTEEGLHITSMTGSWLAIVHGFAGMRTANETLSFAPFLPKEWDEYSFNINYRNRLINVTVDEKRVIFELVKGEPLHMNVYEEPVVLQGRCERRTPNE.

Trp-354–Asp-355 contacts substrate. Residue Glu-483 is the Proton donor of the active site. Lys-588–Gln-589 serves as a coordination point for substrate.

It belongs to the glycosyl hydrolase 65 family.

The catalysed reaction is D-maltose + phosphate = beta-D-glucose 1-phosphate + D-glucose. It functions in the pathway glycan degradation; maltose degradation. Its function is as follows. Catalyzes the phosphorolysis of maltose, leading to the formation of glucose and glucose 1-P. The polypeptide is Maltose phosphorylase (mdxK) (Bacillus subtilis (strain 168)).